An 860-amino-acid polypeptide reads, in one-letter code: Leucine--tRNA ligase (860 aa).

The short motif at 42-52 (PYPSGRLHMGH) is the 'HIGH' region element. Residues 619–623 (KMSKS) carry the 'KMSKS' region motif. Lysine 622 is a binding site for ATP.

It belongs to the class-I aminoacyl-tRNA synthetase family.

The protein resides in the cytoplasm. The catalysed reaction is tRNA(Leu) + L-leucine + ATP = L-leucyl-tRNA(Leu) + AMP + diphosphate. The chain is Leucine--tRNA ligase from Yersinia enterocolitica serotype O:8 / biotype 1B (strain NCTC 13174 / 8081).